The chain runs to 909 residues: UPF0182 protein Moth_1139 (909 aa).

A run of 7 helical transmembrane segments spans residues 8–28 (FCLL…SHFL), 51–71 (VGIR…NLLF), 103–123 (LGIL…PLAA), 165–185 (LLIT…FIFN), 201–221 (LVHF…GFRL), 245–265 (LLPG…IIVL), and 277–297 (AGIL…PLAV). A disordered region spans residues 843 to 862 (PAPAASPQPPSQAATGSPGN).

The protein belongs to the UPF0182 family.

Its subcellular location is the cell membrane. In Moorella thermoacetica (strain ATCC 39073 / JCM 9320), this protein is UPF0182 protein Moth_1139.